Reading from the N-terminus, the 216-residue chain is Octanoyltransferase (216 aa).

The BPL/LPL catalytic domain maps to 32 to 211 (QEASEMLWFL…RFPYFLEALQ (180 aa)). Substrate is bound by residues 71–78 (RGGRYTYH), 142–144 (AIG), and 155–157 (GFS). Cysteine 173 acts as the Acyl-thioester intermediate in catalysis.

This sequence belongs to the LipB family.

It localises to the cytoplasm. It catalyses the reaction octanoyl-[ACP] + L-lysyl-[protein] = N(6)-octanoyl-L-lysyl-[protein] + holo-[ACP] + H(+). It participates in protein modification; protein lipoylation via endogenous pathway; protein N(6)-(lipoyl)lysine from octanoyl-[acyl-carrier-protein]: step 1/2. Functionally, catalyzes the transfer of endogenously produced octanoic acid from octanoyl-acyl-carrier-protein onto the lipoyl domains of lipoate-dependent enzymes. Lipoyl-ACP can also act as a substrate although octanoyl-ACP is likely to be the physiological substrate. This is Octanoyltransferase from Zymomonas mobilis subsp. mobilis (strain ATCC 31821 / ZM4 / CP4).